The chain runs to 338 residues: Lipoate-protein ligase A (338 aa).

Positions 29-216 (PATQRVLFLW…AFFAHYGERI (188 aa)) constitute a BPL/LPL catalytic domain. ATP contacts are provided by residues Arg71, 76-79 (GAVF), and Lys134. Lys134 provides a ligand contact to (R)-lipoate.

It belongs to the LplA family. As to quaternary structure, monomer.

It is found in the cytoplasm. The enzyme catalyses L-lysyl-[lipoyl-carrier protein] + (R)-lipoate + ATP = N(6)-[(R)-lipoyl]-L-lysyl-[lipoyl-carrier protein] + AMP + diphosphate + H(+). The protein operates within protein modification; protein lipoylation via exogenous pathway; protein N(6)-(lipoyl)lysine from lipoate: step 1/2. It functions in the pathway protein modification; protein lipoylation via exogenous pathway; protein N(6)-(lipoyl)lysine from lipoate: step 2/2. In terms of biological role, catalyzes both the ATP-dependent activation of exogenously supplied lipoate to lipoyl-AMP and the transfer of the activated lipoyl onto the lipoyl domains of lipoate-dependent enzymes. This chain is Lipoate-protein ligase A, found in Salmonella typhi.